The primary structure comprises 272 residues: NH(3)-dependent NAD(+) synthetase (272 aa).

45 to 52 (GISGGQDS) provides a ligand contact to ATP. Mg(2+) is bound at residue Asp51. Arg138 is a deamido-NAD(+) binding site. Thr158 is an ATP binding site. Residue Glu163 participates in Mg(2+) binding. Positions 171 and 178 each coordinate deamido-NAD(+). Lys187 and Thr209 together coordinate ATP. Position 258 to 259 (258 to 259 (HK)) interacts with deamido-NAD(+).

Belongs to the NAD synthetase family. Homodimer.

It catalyses the reaction deamido-NAD(+) + NH4(+) + ATP = AMP + diphosphate + NAD(+) + H(+). The protein operates within cofactor biosynthesis; NAD(+) biosynthesis; NAD(+) from deamido-NAD(+) (ammonia route): step 1/1. Catalyzes the ATP-dependent amidation of deamido-NAD to form NAD. Uses ammonia as a nitrogen source. The chain is NH(3)-dependent NAD(+) synthetase from Bacillus velezensis (strain DSM 23117 / BGSC 10A6 / LMG 26770 / FZB42) (Bacillus amyloliquefaciens subsp. plantarum).